The chain runs to 233 residues: Biosynthetic peptidoglycan transglycosylase (233 aa).

A helical membrane pass occupies residues Leu-8–Ile-28.

The protein belongs to the glycosyltransferase 51 family.

It is found in the cell inner membrane. It catalyses the reaction [GlcNAc-(1-&gt;4)-Mur2Ac(oyl-L-Ala-gamma-D-Glu-L-Lys-D-Ala-D-Ala)](n)-di-trans,octa-cis-undecaprenyl diphosphate + beta-D-GlcNAc-(1-&gt;4)-Mur2Ac(oyl-L-Ala-gamma-D-Glu-L-Lys-D-Ala-D-Ala)-di-trans,octa-cis-undecaprenyl diphosphate = [GlcNAc-(1-&gt;4)-Mur2Ac(oyl-L-Ala-gamma-D-Glu-L-Lys-D-Ala-D-Ala)](n+1)-di-trans,octa-cis-undecaprenyl diphosphate + di-trans,octa-cis-undecaprenyl diphosphate + H(+). The protein operates within cell wall biogenesis; peptidoglycan biosynthesis. Peptidoglycan polymerase that catalyzes glycan chain elongation from lipid-linked precursors. The protein is Biosynthetic peptidoglycan transglycosylase of Neisseria meningitidis serogroup C (strain 053442).